The chain runs to 1420 residues: MKDLVKFLKAQSKSNDDFDVIKIGLASPDKIRSWSFGEVKKPETINYRTFKPERDGLFCARIFGPVKDYECLCGKYKRLKHRGVICEKCGVEVTQTKVRRDRMGHIELACPVAHIWFLKSLPSRIGLILDMPLRDIERVLYFESYVVTEPGMTDLEKNQLLTEEQYLEAEERWGDEFDAKMGAEGIQVLLRDMDLEHQCEVMREELQETNSETKRKKITKRLKLLEAFQQSGNKPEWMVMTVLPVLPPDLRPLVPLDGGRFATSDLNDLYRRVINRNNRLKRLLGLVAPDIIVRNEKRMLQESVDALLDNGRRGRAITGSNKRPLKSLADMIKGKQGRFRQNLLGKRVDYSGRSVITVGPYLHLHQCGLPKKMALELFRPFIYSKLESRGIASTIKAAKKMVEREEPIVWDILAEVIREHPILLNRAPTLHRLGIQAFEPLLIEGKAIQLHPLVCAAFNADFDGDQMAVHVPLTLEAQLEARALMMSTNNVLSPASGDPIIVPSQDVVLGLYYMTRDKVNGKGEGMYFLDPREAEKAYRTGQVELHARVKVRITEYSKNEAGEFLAETNLVDTTIGRAILWMIAPKGMPFSVFNQTLGKKAISKLINESYRRLGLKESVVLADQIMYTGFAYAARSGVSVGIDDMVIPAQKNDIITAAEAEVAEIQEQFNSGLVTAGERYNKVIDIWAAANERVAKAMMENLSTEEMLNREGNPEKQASFNSIFMMADSGARGSAVQIRQLAGMRGLMARPDGSIIETPITANFREGLNVLQYFISTHGARKGLADTALKTANSGYLTRRLVDVAQDLVITEDDCGTHEGIVMTPLIEGGDVKEALRDRVLGRVVAEDVLKPGTEQILIPRNTLIDEKWCDVIDVESVDVIKVRSVVTCNTDFGVCAKCYGRDLARGHLINQGEAVGVIAAQSIGEPGTQLTMRTFHIGGAASAAAKESSIQVKNAGTIKLANAKFVTNKEGKIVLTSRNTELTVIDIFGRTKENYKVPYGAVLSKNDGAEVGVGEIVANWDPHTMPVISEVSGRIQFSDIVDGLTVARQTDDLTGLSSIVVQDVGERATAGKDLRPALRLVDAKGNDIFIPGTDVAAQYFLPGKAIVTLDDGAEIAVGEALARIPQESVGTKDITGGLPRVADLFEARKPKEAAILAEISGIVSFGKETKGKRRLVITPAEGEAFEEMIPKWRQLNVFEGEMVQRGDIISDGAETPHDILRLRGVHAVTDYIVNEVQEVYRLQGVKINDKHIEVIVRQMLRKAVITNAYDSEFLEGEQVEVARVKIANRKRAEEGKPLVEFERELLGITKASLATESFISAASFQETTRVLTEAAVAGKRDELRGLKENVIVGRLIPAGTGFAYHQARAKKRVVAEQPFEMPVSKNAFATEADIEAEFEFVADEATQNLAALLNATDEE.

Residues Cys-71, Cys-73, Cys-86, and Cys-89 each contribute to the Zn(2+) site. Mg(2+) contacts are provided by Asp-461, Asp-463, and Asp-465. Zn(2+) is bound by residues Cys-815, Cys-889, Cys-896, and Cys-899.

This sequence belongs to the RNA polymerase beta' chain family. In terms of assembly, the RNAP catalytic core consists of 2 alpha, 1 beta, 1 beta' and 1 omega subunit. When a sigma factor is associated with the core the holoenzyme is formed, which can initiate transcription. Requires Mg(2+) as cofactor. Zn(2+) is required as a cofactor.

It carries out the reaction RNA(n) + a ribonucleoside 5'-triphosphate = RNA(n+1) + diphosphate. Its function is as follows. DNA-dependent RNA polymerase catalyzes the transcription of DNA into RNA using the four ribonucleoside triphosphates as substrates. The chain is DNA-directed RNA polymerase subunit beta' from Haemophilus ducreyi (strain 35000HP / ATCC 700724).